A 134-amino-acid polypeptide reads, in one-letter code: MAKAPNNAAAARVRKKVKKNVAEGIAHVHASFNNTIITITDRQGNALSWATSGGAGFKGSRKSTPFAAQVAAEAAGKVAIECGIKNLEVRIKGPGPGRESAVRALNNLGIKITQIQDVTPVPHNGCRPPKRRRI.

The protein belongs to the universal ribosomal protein uS11 family. As to quaternary structure, part of the 30S ribosomal subunit. Interacts with proteins S7 and S18. Binds to IF-3.

In terms of biological role, located on the platform of the 30S subunit, it bridges several disparate RNA helices of the 16S rRNA. Forms part of the Shine-Dalgarno cleft in the 70S ribosome. In Janthinobacterium sp. (strain Marseille) (Minibacterium massiliensis), this protein is Small ribosomal subunit protein uS11.